We begin with the raw amino-acid sequence, 339 residues long: 4-hydroxy-2-oxovalerate aldolase 3 (339 aa).

In terms of domain architecture, Pyruvate carboxyltransferase spans 7–259 (IRVTDTSLRD…KTGIDFFAIA (253 aa)). 15-16 (RD) is a binding site for substrate. Residue Asp16 participates in Mn(2+) binding. The active-site Proton acceptor is His19. Residues Ser169 and His198 each contribute to the substrate site. 2 residues coordinate Mn(2+): His198 and His200. Tyr289 lines the substrate pocket.

Belongs to the 4-hydroxy-2-oxovalerate aldolase family.

The enzyme catalyses (S)-4-hydroxy-2-oxopentanoate = acetaldehyde + pyruvate. This Rhodococcus jostii (strain RHA1) protein is 4-hydroxy-2-oxovalerate aldolase 3 (hsaF).